The chain runs to 297 residues: Protein AKTIP homolog (297 aa).

Residues 13 to 75 (FLSDLDEKSS…QRSPSGSSPE (63 aa)) are disordered. Positions 17–42 (LDEKSSSSPHDEKKPGDGREVREEKS) are enriched in basic and acidic residues. The span at 59 to 75 (MNLSIARQRSPSGSSPE) shows a compositional bias: polar residues. Residues 84–232 (FLEYTLMAEY…VNECLRRCHN (149 aa)) enclose the UBC core domain.

It belongs to the ubiquitin-conjugating enzyme family. FTS subfamily.

This chain is Protein AKTIP homolog, found in Nematostella vectensis (Starlet sea anemone).